We begin with the raw amino-acid sequence, 148 residues long: MFYTNMETVHNCFNDATITGDEIIDILAFLQSDESDNPSGINEVVPVDDKKRRRTISNRESAKRSRMKKKKRFEELTEEVNRLNIRNQELKNRLANVVSCGNFISRENNRLKTESVCLEIRLLELYRFLVAMQSPISTSVNYITTLEI.

Residues 48-97 (DDKKRRRTISNRESAKRSRMKKKKRFEELTEEVNRLNIRNQELKNRLANV) enclose the bZIP domain. The segment at 50 to 70 (KKRRRTISNRESAKRSRMKKK) is disordered. A basic motif region spans residues 50–72 (KKRRRTISNRESAKRSRMKKKKR). The tract at residues 76–90 (LTEEVNRLNIRNQEL) is leucine-zipper.

It localises to the nucleus. Its function is as follows. Probable transcription factor involved in somatic embryogenesis. Acts as a positive regulator of BHLH109. In Arabidopsis thaliana (Mouse-ear cress), this protein is Basic leucine zipper 4.